A 386-amino-acid chain; its full sequence is Demethylsterigmatocystin 6-O-methyltransferase (386 aa).

Residue 137–150 participates in substrate binding; sequence FDISGPCTQILPDF. Residues 177 to 197 are substrate binding; sequence MFEWMPQHPKHMESLGHLMAL. S-adenosyl-L-methionine contacts are provided by residues 228-229, D253, 273-274, and R289; these read GG and NF. H293 (proton acceptor) is an active-site residue.

This sequence belongs to the class I-like SAM-binding methyltransferase superfamily. Cation-independent O-methyltransferase family. COMT subfamily.

The enzyme catalyses 6-demethylsterigmatocystin + S-adenosyl-L-methionine = sterigmatocystin + S-adenosyl-L-homocysteine + H(+). Its pathway is mycotoxin biosynthesis; aflatoxin biosynthesis. Its function is as follows. Demethylsterigmatocystin 6-O-methyltransferase; part of the gene cluster that mediates the biosynthesis of aflatoxins, a group of polyketide-derived furanocoumarins, and part of the most toxic and carcinogenic compounds among the known mycotoxins. The four major aflatoxins produced by A.parasiticus are aflatoxin B1 (AFB1), aflatoxin B2 (AFB2), aflatoxin G1 (AFG1) and aflatoxin G2 (AFG2). Within the aflatoxin pathway, the methyltransferase aflO then catalyzes the modification of demethylsterigmatocystin (DMST) to sterigmatocystin (ST), and of dihydrodemethylsterigmatocystin (DMDHST) to dihydrosterigmatocystin (DHST). The biosynthesis of aflatoxins begins with the norsolorinic acid synthase aflC that combines a hexanoyl starter unit produced by the fatty acid synthase aflA/aflB and 7 malonyl-CoA extender units to synthesize the precursor NOR. The second step is the conversion of NOR to averantin and requires the norsolorinic acid ketoreductase aflD, which catalyzes the dehydration of norsolorinic acid to form (1'S)-averantin. The norsolorinic acid reductases aflE and aflF may also play a role in the conversion of NOR to AVN. The cytochrome P450 monooxygenase aflG then catalyzes the hydroxylation of AVN to 5'hydroxyaverantin (HAVN). The next step is performed by the 5'-hydroxyaverantin dehydrogenase aflH that transforms HAVN to 5'-oxoaverantin (OAVN) which is further converted to averufin (AVF) by aflK that plays a dual role in the pathway, as a 5'-oxoaverantin cyclase that mediates conversion of 5'-oxoaverantin, as well as a versicolorin B synthase in a later step in the pathway. The averufin oxidase aflI catalyzes the conversion of AVF to versiconal hemiacetal acetate (VHA). VHA is then the substrate for the versiconal hemiacetal acetate esterase aflJ to yield versiconal (VAL). Versicolorin B synthase aflK then converts VAL to versicolorin B (VERB) by closing the bisfuran ring of aflatoxin which is required for DNA-binding, thus giving to aflatoxin its activity as a mutagen. Then, the activity of the versicolorin B desaturase aflL leads to versicolorin A (VERA). A branch point starts from VERB since it can also be converted to dihydrodemethylsterigmatocystin (DMDHST), probably also by aflL, VERA being a precursor for aflatoxins B1 and G1, and DMDHST for aflatoxins B2 and G2. Next, the versicolorin reductase aflM and the cytochrome P450 monooxygenase aflN are involved in conversion of VERA to demethylsterigmatocystin (DMST). AflX and aflY seem also involved in this step, through probable aflX-mediated epoxide ring-opening step following versicolorin A oxidation and aflY-mediated Baeyer-Villiger oxidation required for the formation of the xanthone ring. The methyltransferase aflO then leads to the modification of DMST to sterigmatocystin (ST), and of DMDHST to dihydrosterigmatocystin (DHST). Both ST and DHST are then substrates of the O-methyltransferase aflP to yield O-methylsterigmatocystin (OMST) and dihydro-O-methylsterigmatocystin (DHOMST), respectively. Finally OMST is converted to aflatoxins B1 and G1, and DHOMST to aflatoxins B2 and G2, via the action of several enzymes including O-methylsterigmatocystin oxidoreductase aflQ, the cytochrome P450 monooxygenase aflU, but also the NADH-dependent flavin oxidoreductase nadA which is specifically required for the synthesis of AFG1. The polypeptide is Demethylsterigmatocystin 6-O-methyltransferase (Aspergillus parasiticus (strain ATCC 56775 / NRRL 5862 / SRRC 143 / SU-1)).